The sequence spans 91 residues: YcgL domain-containing protein ETA_15380 (91 aa).

The 85-residue stretch at 1–85 folds into the YcgL domain; the sequence is MFCVIYRSPQ…PLESLLKIHL (85 aa).

This Erwinia tasmaniensis (strain DSM 17950 / CFBP 7177 / CIP 109463 / NCPPB 4357 / Et1/99) protein is YcgL domain-containing protein ETA_15380.